The chain runs to 213 residues: Ras-related protein Rab-25 (213 aa).

Positions 21, 24, 25, 26, 27, 38, 39, 43, and 44 each coordinate GTP. Threonine 26 lines the Mg(2+) pocket. 2 consecutive short sequence motifs (switch) follow at residues 35–49 and 67–84; these read NEFS…GVEF and DTAG…YYRG. Threonine 44 and aspartate 67 together coordinate Mg(2+). 6 residues coordinate GTP: glycine 70, asparagine 125, lysine 126, aspartate 128, alanine 156, and leucine 157. Residues cysteine 209 and cysteine 210 are each lipidated (S-geranylgeranyl cysteine). Cysteine 210 carries the cysteine methyl ester modification. Positions 211 to 213 are cleaved as a propeptide — removed in mature form; it reads ISL.

It belongs to the small GTPase superfamily. Rab family. Interacts (GTP-bound form) with RAB11FIP1, RAB11FIP2, RAB11FIP3 and RAB11FIP4. Interacts (via the hypervariable C-terminal region) with ITGB1 (via the cytoplasmic region); the interaction is GTP-dependent. Interacts with ITGAV. Associates with the integrin alpha-V/beta-1 heterodimer. Interacts with VPS33B. The cofactor is Mg(2+).

It is found in the cell membrane. It localises to the cell projection. The protein localises to the pseudopodium membrane. The protein resides in the cytoplasmic vesicle. The catalysed reaction is GTP + H2O = GDP + phosphate + H(+). Its activity is regulated as follows. Regulated by guanine nucleotide exchange factors (GEFs) which promote the exchange of bound GDP for free GTP. Regulated by GTPase activating proteins (GAPs) which increase the GTP hydrolysis activity. Inhibited by GDP dissociation inhibitors (GDIs) which prevent Rab-GDP dissociation. Its function is as follows. The small GTPases Rab are key regulators of intracellular membrane trafficking, from the formation of transport vesicles to their fusion with membranes. Rabs cycle between an inactive GDP-bound form and an active GTP-bound form that is able to recruit to membranes different set of downstream effectors directly responsible for vesicle formation, movement, tethering and fusion. RAB25 regulates epithelial cell differentiation, proliferation and survival, thereby playing key roles in tumorigenesis. Promotes invasive migration of cells in which it functions to localize and maintain integrin alpha-V/beta-1 at the tips of extending pseudopodia. Involved in the regulation of epithelial morphogenesis through the control of CLDN4 expression and localization at tight junctions. May selectively regulate the apical recycling pathway. Together with MYO5B regulates transcytosis. The polypeptide is Ras-related protein Rab-25 (RAB25) (Canis lupus familiaris (Dog)).